A 353-amino-acid chain; its full sequence is UDP-N-acetylglucosamine--N-acetylmuramyl-(pentapeptide) pyrophosphoryl-undecaprenol N-acetylglucosamine transferase (353 aa).

Residues 10–12 (TGG), asparagine 124, serine 183, and glutamine 283 contribute to the UDP-N-acetyl-alpha-D-glucosamine site.

Belongs to the glycosyltransferase 28 family. MurG subfamily.

It localises to the cell inner membrane. It catalyses the reaction di-trans,octa-cis-undecaprenyl diphospho-N-acetyl-alpha-D-muramoyl-L-alanyl-D-glutamyl-meso-2,6-diaminopimeloyl-D-alanyl-D-alanine + UDP-N-acetyl-alpha-D-glucosamine = di-trans,octa-cis-undecaprenyl diphospho-[N-acetyl-alpha-D-glucosaminyl-(1-&gt;4)]-N-acetyl-alpha-D-muramoyl-L-alanyl-D-glutamyl-meso-2,6-diaminopimeloyl-D-alanyl-D-alanine + UDP + H(+). It functions in the pathway cell wall biogenesis; peptidoglycan biosynthesis. Functionally, cell wall formation. Catalyzes the transfer of a GlcNAc subunit on undecaprenyl-pyrophosphoryl-MurNAc-pentapeptide (lipid intermediate I) to form undecaprenyl-pyrophosphoryl-MurNAc-(pentapeptide)GlcNAc (lipid intermediate II). The protein is UDP-N-acetylglucosamine--N-acetylmuramyl-(pentapeptide) pyrophosphoryl-undecaprenol N-acetylglucosamine transferase of Helicobacter acinonychis (strain Sheeba).